The chain runs to 105 residues: UPF0060 membrane protein Ajs_1326 (105 aa).

The next 4 helical transmembrane spans lie at 4–24 (FALF…PYLW), 30–50 (SAWL…LLTL), 60–80 (AAYG…VDGI), and 82–102 (PTAW…LIMF).

This sequence belongs to the UPF0060 family.

Its subcellular location is the cell inner membrane. The sequence is that of UPF0060 membrane protein Ajs_1326 from Acidovorax sp. (strain JS42).